Reading from the N-terminus, the 511-residue chain is V-type proton ATPase subunit B, brain isoform (511 aa).

Position 400 (arginine 400) interacts with ATP.

Belongs to the ATPase alpha/beta chains family. V-ATPase is a heteromultimeric enzyme made up of two complexes: the ATP-hydrolytic V1 complex and the proton translocation V0 complex. The V1 complex consists of three catalytic AB heterodimers that form a heterohexamer, three peripheral stalks each consisting of EG heterodimers, one central rotor including subunits D and F, and the regulatory subunits C and H. The proton translocation complex V0 consists of the proton transport subunit a, a ring of proteolipid subunits c9c'', rotary subunit d, subunits e and f, and the accessory subunits ATP6AP1/Ac45 and ATP6AP2/PRR. As to expression, kidney; found in early distal nephron, encompassing thick ascending limbs and distal convoluted tubules and in the alpha-intercalated cells of the cortical collecting ducts (at protein level). Expressed in epididymal clear cells (at protein level). Mainly expressed in the organ of Corti and spiral ganglion neurons, in both the early postnatal cochlea (P2) and the adult cochlea (P30).

It localises to the apical cell membrane. The protein localises to the melanosome. Its subcellular location is the cytoplasm. It is found in the cytoplasmic vesicle. The protein resides in the secretory vesicle. It localises to the synaptic vesicle membrane. The protein localises to the clathrin-coated vesicle membrane. Functionally, non-catalytic subunit of the V1 complex of vacuolar(H+)-ATPase (V-ATPase), a multisubunit enzyme composed of a peripheral complex (V1) that hydrolyzes ATP and a membrane integral complex (V0) that translocates protons. V-ATPase is responsible for acidifying and maintaining the pH of intracellular compartments and in some cell types, is targeted to the plasma membrane, where it is responsible for acidifying the extracellular environment. In renal intercalated cells, can partially compensate the lack of ATP6V1B1 and mediate secretion of protons (H+) into the urine under base-line conditions but not in conditions of acid load. The protein is V-type proton ATPase subunit B, brain isoform (Atp6v1b2) of Mus musculus (Mouse).